The sequence spans 124 residues: Small ribosomal subunit protein bS6 (124 aa).

The tract at residues E97–A124 is disordered. Residues R105 to A124 show a composition bias toward basic and acidic residues.

The protein belongs to the bacterial ribosomal protein bS6 family.

Functionally, binds together with bS18 to 16S ribosomal RNA. The sequence is that of Small ribosomal subunit protein bS6 from Zymomonas mobilis subsp. mobilis (strain ATCC 31821 / ZM4 / CP4).